Reading from the N-terminus, the 497-residue chain is Guanosine-5'-triphosphate,3'-diphosphate pyrophosphatase (497 aa).

The protein belongs to the GppA/Ppx family. GppA subfamily.

The enzyme catalyses guanosine 3'-diphosphate 5'-triphosphate + H2O = guanosine 3',5'-bis(diphosphate) + phosphate + H(+). Its pathway is purine metabolism; ppGpp biosynthesis; ppGpp from GTP: step 2/2. Functionally, catalyzes the conversion of pppGpp to ppGpp. Guanosine pentaphosphate (pppGpp) is a cytoplasmic signaling molecule which together with ppGpp controls the 'stringent response', an adaptive process that allows bacteria to respond to amino acid starvation, resulting in the coordinated regulation of numerous cellular activities. In Photobacterium profundum (strain SS9), this protein is Guanosine-5'-triphosphate,3'-diphosphate pyrophosphatase.